The following is a 578-amino-acid chain: Avenacosidase 2 (578 aa).

The transit peptide at 1–57 (MALLCSALSNSTHPSFRSHIAGANSENLWHLSAHPAQKSKRRCNLTLSSRAAARISS) directs the protein to the chloroplast. A beta-D-glucoside contacts are provided by residues Gln89, His193, and 238 to 239 (NE). Residue Glu239 is the Proton donor of the active site. An intrachain disulfide couples Cys258 to Cys264. Residues Tyr381, Glu454, Trp504, 511–512 (EW), and Phe520 each bind a beta-D-glucoside. Catalysis depends on Glu454, which acts as the Nucleophile.

This sequence belongs to the glycosyl hydrolase 1 family. In terms of assembly, heteromultimer with P60A in a 1:1 stoichiometry. Aggregates to form the fibrillar stromacentre.

Its subcellular location is the plastid. It localises to the chloroplast stroma. It catalyses the reaction avenacoside B + H2O = 26-desgluco-avenacoside B + D-glucose. In terms of biological role, beta-glucosidase acting as a preformed defense system. Hydrolyzes the bisdesmosides avenacosides A and B to 26-desgluco-avenacosides exhibiting fungicidal activity. Can use beta-fucoside &gt; beta-glucoside &gt; beta-galactoside &gt; beta-xyloside as substrates, but not alpha-glycosides, beta-thioglucosides and disaccharides. In Avena sativa (Oat), this protein is Avenacosidase 2 (P60B).